A 186-amino-acid polypeptide reads, in one-letter code: Akirin-1 (186 aa).

The segment at 1–64 (MACGATLKRS…PLPQLGGDRR (64 aa)) is disordered. The short motif at 22 to 27 (PKRRRC) is the Nuclear localization signal element. Residues 49–60 (QQGQQQPLPQLG) show a composition bias toward low complexity. The SYVS motif signature appears at 183-186 (SYVS).

It belongs to the akirin family.

The protein resides in the nucleus. Its function is as follows. Molecular adapter that acts as a bridge between proteins, and which is involved skeletal muscle development. Functions as a signal transducer for MSTN during skeletal muscle regeneration and myogenesis. The protein is Akirin-1 of Xenopus tropicalis (Western clawed frog).